Reading from the N-terminus, the 107-residue chain is Thioredoxin 1 (107 aa).

One can recognise a Thioredoxin domain in the interval serine 2–leucine 107. Cysteine 32 and cysteine 35 are disulfide-bonded.

The protein belongs to the thioredoxin family.

In terms of biological role, participates in various redox reactions through the reversible oxidation of its active center dithiol to a disulfide and catalyzes dithiol-disulfide exchange reactions. The sequence is that of Thioredoxin 1 (trxA) from Nostoc sp. (strain PCC 7120 / SAG 25.82 / UTEX 2576).